The primary structure comprises 358 residues: Homer protein homolog 3 (358 aa).

The segment at 1 to 80 (MSTAREQPIF…TKTSQKFGQW (80 aa)) is required for interaction with NFATC2. Residues 1–113 (MSTAREQPIF…EKFQEVKEAA (113 aa)) enclose the WH1 domain. Positions 95–122 (SEQQLTQFAEKFQEVKEAARLAREKSQD) form a coiled coil. Residues S120 and S158 each carry the phosphoserine modification. Disordered regions lie at residues 137-168 (QVPP…TERE) and 239-296 (AEPV…QVQD). Residues 190-355 (ALQDSNQRLA…LREGLARLAE (166 aa)) are a coiled coil. The segment covering 257-267 (LEARVQTKDQE) has biased composition (basic and acidic residues). A compositionally biased stretch (polar residues) spans 268–277 (IQTLKNQSTG). The span at 280–290 (EAPDTAEREET) shows a compositional bias: basic and acidic residues.

The protein belongs to the Homer family. Tetramer. Encodes coiled-coil structures that mediate homo- and heteromultimerization. Interacts with NFATC2; interaction is calcium independent; interaction competes with PPP3CA for NFATC2 binding; interaction is reduced by AKT activation. Interacts with NFATC1 and NFATC4. Interacts with SHANK1; forms a high-order complex at least composed of SHANK1 and HOMER3; the complex formation is regulated by CAMK2A-mediated phosphorylation.

It localises to the cytoplasm. The protein resides in the postsynaptic density. It is found in the synapse. Its function is as follows. Postsynaptic density scaffolding protein. Binds and cross-links cytoplasmic regions of GRM1, GRM5, ITPR1, DNM3, RYR1, RYR2, SHANK1 and SHANK3. By physically linking GRM1 and GRM5 with ER-associated ITPR1 receptors, it aids the coupling of surface receptors to intracellular calcium release. Negatively regulates T cell activation by inhibiting the calcineurin-NFAT pathway. Acts by competing with calcineurin/PPP3CA for NFAT protein binding, hence preventing NFAT activation by PPP3CA. In Rattus norvegicus (Rat), this protein is Homer protein homolog 3.